Here is a 695-residue protein sequence, read N- to C-terminus: ATP-dependent zinc metalloprotease FTSH 2, chloroplastic (695 aa).

The N-terminal 47 residues, 1–47 (MAASSACLVGNGLSVNTTTKQRLSKHFSGRQTSFSSVIRTSKVNVVK), are a transit peptide targeting the chloroplast. The transit peptide at 48–82 (ASLDGKKKQEGRRDFLKILLGNAGVGLVASGKANA) directs the protein to the thylakoid. The Lumenal, thylakoid portion of the chain corresponds to 83–167 (DEQGVSSSRM…AHNAQEDQGS (85 aa)). A helical membrane pass occupies residues 168–188 (VLFNLIGNLAFPALLIGGLFL). Over 189–695 (LSRRSGGGMG…PASAPTPAAV (507 aa)) the chain is Stromal. 267 to 274 (GPPGTGKT) serves as a coordination point for ATP. Position 488 (histidine 488) interacts with Zn(2+). Glutamate 489 is an active-site residue. Zn(2+) is bound by residues histidine 492 and aspartate 566. The tract at residues 673-695 (PPENRVPSSTTTTPASAPTPAAV) is disordered. The segment covering 679-695 (PSSTTTTPASAPTPAAV) has biased composition (low complexity).

In the N-terminal section; belongs to the AAA ATPase family. It in the C-terminal section; belongs to the peptidase M41 family. In terms of assembly, interacts with CHIP and FTSH5. Heterohexamers with FTSH1, FTSH5 and FTSH8. May also form homooligomers. Zn(2+) serves as cofactor. In terms of processing, the FTSH2 precursor is ubiquitinated by CHIP in the cytoplasm. In terms of tissue distribution, expressed in cotyledons, cauline and rosette leaves, stems, sepals, flovers and siliques. Very low in roots.

The protein resides in the plastid. It localises to the chloroplast thylakoid membrane. Part of a complex that function as an ATP-dependent zinc metallopeptidase. Involved in the thylakoid formation and in the removal of damaged D1 in the photosystem II, preventing cell death under high-intensity light conditions, but not involved in thermotolerance. This is ATP-dependent zinc metalloprotease FTSH 2, chloroplastic (FTSH2) from Arabidopsis thaliana (Mouse-ear cress).